The following is a 229-amino-acid chain: MKLSTDLRAFESRIGHAFREPDRLLRAVTHASLSSATRPDNQRLEFLGDRVLGLVMAEALLAADKAATEGQLAPRFNALVRKETCAAVAREVGLGDVLKLGRSEMMSGGRRKEALLGDALEAVIAAVYLDAGFEAARRLVLRLWGERIAQVEADARDAKTALQEWAQARGLPPPCYEAVDRSGPDHAPIFTVEVRLGNGETERSAAGTKRVAEQAAARALLARMEARDD.

Residues 7 to 132 form the RNase III domain; it reads LRAFESRIGH…VIAAVYLDAG (126 aa). Glutamate 45 provides a ligand contact to Mg(2+). Residue aspartate 49 is part of the active site. Aspartate 118 and glutamate 121 together coordinate Mg(2+). Residue glutamate 121 is part of the active site. One can recognise a DRBM domain in the interval 157–226; it reads DAKTALQEWA…ARALLARMEA (70 aa).

It belongs to the ribonuclease III family. In terms of assembly, homodimer. Mg(2+) is required as a cofactor.

The protein localises to the cytoplasm. The enzyme catalyses Endonucleolytic cleavage to 5'-phosphomonoester.. Functionally, digests double-stranded RNA. Involved in the processing of primary rRNA transcript to yield the immediate precursors to the large and small rRNAs (23S and 16S). Processes some mRNAs, and tRNAs when they are encoded in the rRNA operon. Processes pre-crRNA and tracrRNA of type II CRISPR loci if present in the organism. The polypeptide is Ribonuclease 3 (Cereibacter sphaeroides (strain ATCC 17025 / ATH 2.4.3) (Rhodobacter sphaeroides)).